We begin with the raw amino-acid sequence, 275 residues long: NH(3)-dependent NAD(+) synthetase (275 aa).

39 to 46 (GLSGGVDS) serves as a coordination point for ATP. Aspartate 45 contributes to the Mg(2+) binding site. Arginine 124 contributes to the deamido-NAD(+) binding site. Residue threonine 144 participates in ATP binding. Residue glutamate 149 participates in Mg(2+) binding. Deamido-NAD(+)-binding residues include lysine 157 and aspartate 164. ATP is bound by residues lysine 173 and serine 195. A deamido-NAD(+)-binding site is contributed by 255–256 (HK).

It belongs to the NAD synthetase family. As to quaternary structure, homodimer.

It catalyses the reaction deamido-NAD(+) + NH4(+) + ATP = AMP + diphosphate + NAD(+) + H(+). It participates in cofactor biosynthesis; NAD(+) biosynthesis; NAD(+) from deamido-NAD(+) (ammonia route): step 1/1. In terms of biological role, catalyzes the ATP-dependent amidation of deamido-NAD to form NAD. Uses ammonia as a nitrogen source. The protein is NH(3)-dependent NAD(+) synthetase of Staphylothermus marinus (strain ATCC 43588 / DSM 3639 / JCM 9404 / F1).